A 634-amino-acid polypeptide reads, in one-letter code: MDLWQLLLTLAVAGSSDAFSGSEATPAFLVRASQSLQILYPVLETNSSGNPKFTKCRSPELETFSCHWTDGANHSLQSPGSVQMFYIRRDIQEWKECPDYVSAGENSCYFNSSYTSVWTPYCIKLTSNGGIVDHKCFSVEDIVQPDPPVGLNWTLLNISLTEIHADILVKWEPPPNTDVKMGWIILEYELHYKELNETQWKMMDPLMVTSVPMYSLRLDKEYEVRVRTRQRNTEKYGKFSEVLLITFPQMNPSACEEDFQFPWFLIIIFGILGLAVTLYLLIFSKQQRIKMLILPPVPVPKIKGIDPDLLKEGKLEEVNTILAIHDNYKHEFYNDDSWVEFIELDIDDPDEKTEGSDTDRLLSNDHEKSLNIFGAKDDDSGRTSCYEPDILEADFHVSDMCDGTSEVAQPQRLKGEADISCLDQKNQNNSPSNDAAPASQQPSVILVEENKPRPLLIGGTESTHQAVHTQLSNPSSLANIDFYAQVSDITPAGNVVLSPGQKNKTGNPQCDTHPEVVTPCQANFIVDNAYFCEVDAKKYIALAPHVEAESHVEPSFNQEDIYITTESLTTTAGRSGTAEHVPSSEIPVPDYTSIHIVQSPQGLVLNATALPLPDKEFLSSCGYVSTDQLNKIMP.

The signal sequence occupies residues 1–18 (MDLWQLLLTLAVAGSSDA). Residues 19–260 (FSGSEATPAF…NPSACEEDFQ (242 aa)) are Extracellular-facing. N-linked (GlcNAc...) asparagine glycosylation is present at Asn-46. Cys-56 and Cys-66 are joined by a disulfide. Asn-73 is a glycosylation site (N-linked (GlcNAc...) asparagine). A disulfide bridge links Cys-97 with Cys-108. Asn-111 carries an N-linked (GlcNAc...) asparagine glycan. Cys-122 and Cys-136 form a disulfide bridge. The 104-residue stretch at 147–250 (PPVGLNWTLL…EVLLITFPQM (104 aa)) folds into the Fibronectin type-III domain. N-linked (GlcNAc...) asparagine glycosylation is found at Asn-152, Asn-157, and Asn-196. The WSXWS motif signature appears at 236–240 (YGKFS). A helical membrane pass occupies residues 261 to 284 (FPWFLIIIFGILGLAVTLYLLIFS). Over 285-634 (KQQRIKMLIL…STDQLNKIMP (350 aa)) the chain is Cytoplasmic. The segment at 290–375 (KMLILPPVPV…HEKSLNIFGA (86 aa)) is required for JAK2 binding. A Box 1 motif motif is present at residues 293 to 301 (ILPPVPVPK). Positions 336–345 (DSWVEFIELD) match the UbE motif motif. Phosphoserine is present on Ser-337.

Belongs to the type I cytokine receptor family. Type 1 subfamily. As to quaternary structure, on growth hormone (GH) binding, forms homodimers and binds JAK2 via a box 1-containing domain. In terms of processing, the soluble form (GHBP) is produced by phorbol ester-promoted proteolytic cleavage at the cell surface (shedding) by ADAM17/TACE. Shedding is inhibited by growth hormone (GH) binding to the receptor probably due to a conformational change in GHR rendering the receptor inaccessible to ADAM17. On GH binding, phosphorylated on tyrosine residues in the cytoplasmic domain by JAK2. Post-translationally, ubiquitinated by the ECS(SOCS2) complex following ligand-binding and phosphorylation by JAK2, leading to its degradation by the proteasome. Regulation by the ECS(SOCS2) complex acts as a negative feedback loop of growth hormone receptor signaling. Ubiquitination is not sufficient for GHR internalization.

It is found in the cell membrane. The protein resides in the secreted. In terms of biological role, receptor for pituitary gland growth hormone (GH1) involved in regulating postnatal body growth. On ligand binding, couples to the JAK2/STAT5 pathway. The soluble form (GHBP) acts as a reservoir of growth hormone in plasma and may be a modulator/inhibitor of GH signaling. This chain is Growth hormone receptor (GHR), found in Bos taurus (Bovine).